A 285-amino-acid polypeptide reads, in one-letter code: Shikimate dehydrogenase (NADP(+)) (285 aa).

Shikimate-binding positions include 20-22 (SIS) and serine 67. Lysine 71 (proton acceptor) is an active-site residue. NADP(+) is bound at residue glutamate 83. Asparagine 92 and aspartate 107 together coordinate shikimate. Residues 129-133 (GAGGA) and methionine 227 contribute to the NADP(+) site. Tyrosine 229 contacts shikimate. Residue glycine 250 coordinates NADP(+).

The protein belongs to the shikimate dehydrogenase family. In terms of assembly, homodimer.

It catalyses the reaction shikimate + NADP(+) = 3-dehydroshikimate + NADPH + H(+). It functions in the pathway metabolic intermediate biosynthesis; chorismate biosynthesis; chorismate from D-erythrose 4-phosphate and phosphoenolpyruvate: step 4/7. In terms of biological role, involved in the biosynthesis of the chorismate, which leads to the biosynthesis of aromatic amino acids. Catalyzes the reversible NADPH linked reduction of 3-dehydroshikimate (DHSA) to yield shikimate (SA). The polypeptide is Shikimate dehydrogenase (NADP(+)) (Streptococcus gordonii (strain Challis / ATCC 35105 / BCRC 15272 / CH1 / DL1 / V288)).